The sequence spans 110 residues: Small ribosomal subunit protein uS10m (110 aa).

Belongs to the universal ribosomal protein uS10 family.

Its subcellular location is the mitochondrion. This Pisum sativum (Garden pea) protein is Small ribosomal subunit protein uS10m (RPS10).